We begin with the raw amino-acid sequence, 213 residues long: Pyrrolidone-carboxylate peptidase (213 aa).

Active-site residues include Glu78, Cys141, and His165.

This sequence belongs to the peptidase C15 family. In terms of assembly, homotetramer.

It localises to the cytoplasm. It carries out the reaction Release of an N-terminal pyroglutamyl group from a polypeptide, the second amino acid generally not being Pro.. Its function is as follows. Removes 5-oxoproline from various penultimate amino acid residues except L-proline. This Clostridium botulinum (strain Alaska E43 / Type E3) protein is Pyrrolidone-carboxylate peptidase.